The primary structure comprises 642 residues: Capsid vertex component 2 (642 aa).

Residues 1 to 48 (MSLLHTFWRLPVAVFFEPHEENVLRCPERVLRRLLEDAAVTMRGGGWR) form an interaction with major capsid protein/MCP region. A disordered region spans residues 97 to 125 (DEGPSPRTLLQPPCRPRSSSPGTGVAGAS).

It belongs to the herpesviridae CVC2 protein family. Heterodimerizes with CVC1. Interacts with major capsid protein/MCP and triplex capsid protein 1/TRX1 at the pentamer vertices. Interacts with the large tegument protein/LTP.

Its subcellular location is the virion. The protein resides in the host nucleus. In terms of biological role, capsid vertex-specific component that plays a role during viral DNA encapsidation, assuring correct genome cleavage and presumably stabilizing capsids that contain full-length viral genomes. Participates in the interaction between the capsid and the tegument through interaction with the large tegument protein/LTP. This chain is Capsid vertex component 2, found in Homo sapiens (Human).